The sequence spans 281 residues: MPLTALESTINAAFDARDTVTAATQGEIRQAVEDALDLLDQGKVRVAQRDASGAWTVNQWLKKAVLLSFRLNDMGVIAGGPGGANWWDKVPSKFEGWGENRFREAGFRAVPGAIVRRSAFIAKNAVLMPSFVNLGAYVDESTMVDTWATVGSCAQIGKRVHISGGAGIGGVLEPLQAGPVIIEDDCFIGARSEVAEGVIVRKGAVLAMGVFLGASTKIVDRETGEVFVGEVPEYAVLVPGTLPGKPMKNGAPGPATACAVIVKRVDERTRSKTSINELLRD.

Substrate contacts are provided by R108 and D145.

It belongs to the transferase hexapeptide repeat family. In terms of assembly, homotrimer.

The protein resides in the cytoplasm. It catalyses the reaction (S)-2,3,4,5-tetrahydrodipicolinate + succinyl-CoA + H2O = (S)-2-succinylamino-6-oxoheptanedioate + CoA. It functions in the pathway amino-acid biosynthesis; L-lysine biosynthesis via DAP pathway; LL-2,6-diaminopimelate from (S)-tetrahydrodipicolinate (succinylase route): step 1/3. The sequence is that of 2,3,4,5-tetrahydropyridine-2,6-dicarboxylate N-succinyltransferase from Rhodopseudomonas palustris (strain ATCC BAA-98 / CGA009).